The following is a 1319-amino-acid chain: ERAD-associated E3 ubiquitin-protein ligase DOA10 (1319 aa).

M1 is subject to N-acetylmethionine. At 1 to 131 (MDVDSDVNVS…LTFFEKARLA (131 aa)) the chain is on the cytoplasmic side. The RING-CH-type zinc finger occupies 31-100 (DDAPSGATCR…DICHYPIQFK (70 aa)). Zn(2+) is bound by residues C39, C42, C56, C58, H66, C69, C90, and C93. Residues 132-152 (LTIGLAAVLYIIGVPLVWNMF) traverse the membrane as a helical segment. Residues 153–203 (GKLYTMMLDGSSPYPGDFLKSLIYGYDQSATPELTTRAIFYQLLQNHSFTS) lie on the Lumenal side of the membrane. A helical membrane pass occupies residues 204-224 (LQFIMIVILHIALYFQYDMIV). Residues 225 to 468 (REDVFSKMVF…GPLVINLKLK (244 aa)) are Cytoplasmic-facing. Residues 291-306 (ADNNNNVINPRNDNVP) show a composition bias toward low complexity. Disordered stretches follow at residues 291-315 (ADNN…DHRN) and 329-381 (EATE…EADY). A helical membrane pass occupies residues 469-489 (LLNVIAYFIIAVVFTAIYLAI). Residues 490-491 (SY) lie on the Lumenal side of the membrane. Residues 492-512 (LFPTFIGFGLLKIYFGIFKVI) traverse the membrane as a helical segment. At 513-626 (LRGLCHLYYL…LFALKCTFKV (114 aa)) the chain is on the cytoplasmic side. A helical transmembrane segment spans residues 627-647 (FTLFFIELAGFPILAGVMLDF). Topologically, residues 648 to 660 (SLFCPILASNSRM) are lumenal. Residues 661-681 (LWVPSICAIWPPFSLFVYWTI) traverse the membrane as a helical segment. The Cytoplasmic segment spans residues 682–739 (GTLYMYWFAKYIGMIRKNIIRPGVLFFIRSPEDPNIKILHDSLIHPMSIQLSRLCLSM). Residues 740–760 (FIYAIFIVLGFGFHTRIFFPF) traverse the membrane as a helical segment. The Lumenal portion of the chain corresponds to 761 to 777 (MLKSNLLSVPEAYKPTS). The chain crosses the membrane as a helical span at residues 778–797 (IISWKFNTILLTLYFTKRIL). The Cytoplasmic portion of the chain corresponds to 798 to 965 (ESSSYVKPLL…YVPPDFRLRY (168 aa)). Residues 966 to 986 (MTLLGLVWLFASILMLGVTFI) form a helical membrane-spanning segment. Over 987–1019 (SQALINFVCSFGFLPVVKLLLGERNKVYVAWKE) the chain is Lumenal. The helical transmembrane segment at 1020-1040 (LSDISYSYLNIYYVCVGSVCL) threads the bilayer. Topologically, residues 1041–1113 (SKIAKDILHF…IFDSMLVKYN (73 aa)) are cytoplasmic. A helical membrane pass occupies residues 1114–1134 (LMVFIAIMIAVIRTMVSWVVL). Over 1135–1168 (TDGILACYNYLTIRVFGNSSYTIGNSKWFKYDES) the chain is Lumenal. A helical transmembrane segment spans residues 1169-1189 (LLFVVWIISSMVNFGTGYKSL). At 1190-1213 (KLFFRNRNTSKLNFLKTMALELFK) the chain is on the cytoplasmic side. A helical membrane pass occupies residues 1214 to 1234 (QGFLHMVIYVLPIIILSLVFL). At 1235–1270 (RDVSTKQIIDISHGSRSFTLSLNESFPTWTRMQDIY) the chain is on the lumenal side. Residues 1271–1291 (FGLLIALESFTFFFQATVLFI) form a helical membrane-spanning segment. The Cytoplasmic portion of the chain corresponds to 1292–1319 (QWFKSTVQNVKDEVYTKGRALENLPDES).

It belongs to the DOA10/MARCH6 family. Component of the DOA10 ubiquitin ligase complex which contains E3 ligase SSM4/DOA10 and CDC48-binding protein UBX2/SEL1. The DOA10 complex interacts with the heterotrimeric CDC48-NPL4-UFD1 ATPase complex which is recruited by UBX2/SEL1 via its interaction with CDC48. Interacts with its associated ubiquitin conjugating enzymes UBC6 and UBC7 with its membrane anchor CUE1. Interacts with PEX29.

It localises to the endoplasmic reticulum membrane. Its subcellular location is the nucleus inner membrane. The catalysed reaction is S-ubiquitinyl-[E2 ubiquitin-conjugating enzyme]-L-cysteine + [acceptor protein]-L-lysine = [E2 ubiquitin-conjugating enzyme]-L-cysteine + N(6)-ubiquitinyl-[acceptor protein]-L-lysine.. The protein operates within protein modification; protein ubiquitination. Functionally, E3 ubiquitin-protein ligase which accepts ubiquitin specifically from endoplasmic reticulum-associated UBC6 and UBC7 E2 ligases, and transfers it to substrates promoting their degradation. Mediates the degradation of a broad range of substrates, including endoplasmic reticulum membrane proteins (ERQC), soluble nuclear proteins and soluble cytoplasmic proteins (CytoQC). Component of the DOA10 ubiquitin ligase complex, which is part of the ERAD-C pathway responsible for the rapid degradation of membrane proteins with misfolded cytoplasmic domains. ERAD-C substrates are ubiquitinated through DOA10 in conjunction with the E2 ubiquitin-conjugating enzymes UBC6 and UBC7-CUE1. Ubiquitinated substrates are then removed to the cytosol via the action of the UFD1-NPL4-CDC48/p97 (UNC) AAA ATPase complex and targeted to the proteasome. Also recognizes the N-terminally acetylated residue of proteins as degradation signal (degron). N-terminally acetylated target proteins include MATALPHA2, TBF1, SLK19, YMR090W, HIS3, HSP104, UBP6 and ARO8. Catalyzes ubiquitination of mislocalized tail-anchored proteins that are extracted from the mitochondrion membrane by MSP1: following extraction, mistargeted proteins are transferred to the endoplasmic reticulum, where they are ubiquitinated by DOA10 and degraded by the proteasome. The polypeptide is ERAD-associated E3 ubiquitin-protein ligase DOA10 (SSM4) (Saccharomyces cerevisiae (strain ATCC 204508 / S288c) (Baker's yeast)).